Consider the following 250-residue polypeptide: Acidic endochitinase (250 aa).

Gln1 is subject to Pyrrolidone carboxylic acid. Residues 1-36 (QNCQCDTTIYCCSQHGYCGNSYDYCGPGCQAGPCWD) enclose the Chitin-binding type-1 domain. Disulfide bonds link Cys3–Cys12, Cys5–Cys18, Cys11–Cys25, Cys29–Cys34, Cys66–Cys115, Cys128–Cys136, and Cys218–Cys250. Glu110 acts as the Proton donor in catalysis.

This sequence belongs to the glycosyl hydrolase 19 family. Chitinase class I subfamily.

The catalysed reaction is Random endo-hydrolysis of N-acetyl-beta-D-glucosaminide (1-&gt;4)-beta-linkages in chitin and chitodextrins.. Defense against chitin-containing fungal pathogens. This is Acidic endochitinase from Dioscorea japonica (Japanese yam).